A 184-amino-acid chain; its full sequence is UPF0149 protein PSEEN5316 (184 aa).

This sequence belongs to the UPF0149 family.

The chain is UPF0149 protein PSEEN5316 from Pseudomonas entomophila (strain L48).